The primary structure comprises 260 residues: Ribonuclease HII (260 aa).

The region spanning 70–260 (QAIAGIDEVG…PIKSMLKEKN (191 aa)) is the RNase H type-2 domain. The a divalent metal cation site is built by D76, E77, and D171.

The protein belongs to the RNase HII family. Mn(2+) is required as a cofactor. Requires Mg(2+) as cofactor.

It is found in the cytoplasm. The enzyme catalyses Endonucleolytic cleavage to 5'-phosphomonoester.. In terms of biological role, endonuclease that specifically degrades the RNA of RNA-DNA hybrids. The sequence is that of Ribonuclease HII from Streptococcus mutans serotype c (strain ATCC 700610 / UA159).